Consider the following 61-residue polypeptide: Sec-independent protein translocase protein TatA (61 aa).

A helical transmembrane segment spans residues 1–21 (MFGLGITEILLILGIIILIFG).

This sequence belongs to the TatA/E family. As to quaternary structure, the Tat system comprises two distinct complexes: a TatABC complex, containing multiple copies of TatA, TatB and TatC subunits, and a separate TatA complex, containing only TatA subunits. Substrates initially bind to the TatABC complex, which probably triggers association of the separate TatA complex to form the active translocon.

It is found in the cell inner membrane. Part of the twin-arginine translocation (Tat) system that transports large folded proteins containing a characteristic twin-arginine motif in their signal peptide across membranes. TatA could form the protein-conducting channel of the Tat system. The protein is Sec-independent protein translocase protein TatA of Maridesulfovibrio salexigens (strain ATCC 14822 / DSM 2638 / NCIMB 8403 / VKM B-1763) (Desulfovibrio salexigens).